Here is a 123-residue protein sequence, read N- to C-terminus: Protein Wnt-3b (123 aa).

Residue S1 is the site of O-palmitoleoyl serine; by PORCN attachment. C89 and C104 are joined by a disulfide. An N-linked (GlcNAc...) asparagine glycan is attached at N90.

This sequence belongs to the Wnt family. Palmitoleoylation is required for efficient binding to frizzled receptors. Depalmitoleoylation leads to Wnt signaling pathway inhibition.

The protein localises to the secreted. It is found in the extracellular space. Its subcellular location is the extracellular matrix. Functionally, ligand for members of the frizzled family of seven transmembrane receptors. Probable developmental protein. May be a signaling molecule which affects the development of discrete regions of tissues. Is likely to signal over only few cell diameters. The chain is Protein Wnt-3b (WNT-3B) from Plethodon jordani (Red-cheeked salamander).